A 241-amino-acid chain; its full sequence is MQINISNLDVKNHLDKFIEDRLEYEFCKQDKYLYLENDNLKLHYNNKELFIDFNDSEILNRINPKTKKCSVVQAIEGRSKAKLTILDTTAGLGRDTFTLAARGHTLLTLEKDSYLYLLLKDALQRAQQINYLKEIANRITLINTDSNEYILTTDKSFDCVYVDPMFPPRKKSAKVKQGMQILHQVGFNDEVSNSNLLDNIIQTQISSKAVVKRPINAEFLSNKKPSSQLKGKTNRFDIYSL.

S-adenosyl-L-methionine is bound by residues 94–95 (RD) and aspartate 163.

The protein belongs to the methyltransferase superfamily. RsmJ family.

The protein localises to the cytoplasm. The enzyme catalyses guanosine(1516) in 16S rRNA + S-adenosyl-L-methionine = N(2)-methylguanosine(1516) in 16S rRNA + S-adenosyl-L-homocysteine + H(+). Functionally, specifically methylates the guanosine in position 1516 of 16S rRNA. This chain is Ribosomal RNA small subunit methyltransferase J, found in Francisella tularensis subsp. novicida (strain U112).